The sequence spans 306 residues: UDP-3-O-acyl-N-acetylglucosamine deacetylase (306 aa).

Residues histidine 81, histidine 241, and aspartate 245 each coordinate Zn(2+). Catalysis depends on histidine 268, which acts as the Proton donor.

Belongs to the LpxC family. Zn(2+) serves as cofactor.

It catalyses the reaction a UDP-3-O-[(3R)-3-hydroxyacyl]-N-acetyl-alpha-D-glucosamine + H2O = a UDP-3-O-[(3R)-3-hydroxyacyl]-alpha-D-glucosamine + acetate. The protein operates within glycolipid biosynthesis; lipid IV(A) biosynthesis; lipid IV(A) from (3R)-3-hydroxytetradecanoyl-[acyl-carrier-protein] and UDP-N-acetyl-alpha-D-glucosamine: step 2/6. Catalyzes the hydrolysis of UDP-3-O-myristoyl-N-acetylglucosamine to form UDP-3-O-myristoylglucosamine and acetate, the committed step in lipid A biosynthesis. The chain is UDP-3-O-acyl-N-acetylglucosamine deacetylase from Hydrogenovibrio crunogenus (strain DSM 25203 / XCL-2) (Thiomicrospira crunogena).